A 756-amino-acid polypeptide reads, in one-letter code: 5-methyltetrahydropteroyltriglutamate--homocysteine methyltransferase (756 aa).

5-methyltetrahydropteroyltri-L-glutamate-binding positions include 20 to 23 (RELK) and Lys114. L-homocysteine contacts are provided by residues 433 to 435 (IGS) and Glu486. Residues 433–435 (IGS) and Glu486 contribute to the L-methionine site. 5-methyltetrahydropteroyltri-L-glutamate is bound by residues 517–518 (RC) and Trp563. Asp601 provides a ligand contact to L-homocysteine. Asp601 provides a ligand contact to L-methionine. Glu607 contributes to the 5-methyltetrahydropteroyltri-L-glutamate binding site. Zn(2+) contacts are provided by His643, Cys645, and Glu667. His696 functions as the Proton donor in the catalytic mechanism. Cys728 provides a ligand contact to Zn(2+).

It belongs to the vitamin-B12 independent methionine synthase family. Zn(2+) is required as a cofactor.

It catalyses the reaction 5-methyltetrahydropteroyltri-L-glutamate + L-homocysteine = tetrahydropteroyltri-L-glutamate + L-methionine. Its pathway is amino-acid biosynthesis; L-methionine biosynthesis via de novo pathway; L-methionine from L-homocysteine (MetE route): step 1/1. Its function is as follows. Catalyzes the transfer of a methyl group from 5-methyltetrahydrofolate to homocysteine resulting in methionine formation. The sequence is that of 5-methyltetrahydropteroyltriglutamate--homocysteine methyltransferase from Mycolicibacterium paratuberculosis (strain ATCC BAA-968 / K-10) (Mycobacterium paratuberculosis).